Consider the following 349-residue polypeptide: tRNA pseudouridine synthase D (349 aa).

Substrate is bound at residue F27. D80 (nucleophile) is an active-site residue. A substrate-binding site is contributed by N129. Residues G155–L303 form the TRUD domain. F329 lines the substrate pocket.

This sequence belongs to the pseudouridine synthase TruD family.

It catalyses the reaction uridine(13) in tRNA = pseudouridine(13) in tRNA. Its function is as follows. Responsible for synthesis of pseudouridine from uracil-13 in transfer RNAs. The sequence is that of tRNA pseudouridine synthase D from Escherichia coli O17:K52:H18 (strain UMN026 / ExPEC).